A 151-amino-acid polypeptide reads, in one-letter code: Transcriptional regulator MraZ (151 aa).

SpoVT-AbrB domains are found at residues 5–52 (ANAI…PLSE) and 81–124 (AVDL…DEDA).

The protein belongs to the MraZ family. In terms of assembly, forms oligomers.

The protein resides in the cytoplasm. It is found in the nucleoid. This is Transcriptional regulator MraZ from Pseudomonas syringae pv. syringae (strain B728a).